Consider the following 282-residue polypeptide: MKVIHTIKDLQAELSVLKAQGKKVGLVPTMGALHAGHASLVKRSVNENEVTVVSVFVNPTQFNDKNDLVKYPRTLDADCKLLEACGATYAFAPSVEEMYPEPDTRQFSYAPLDTVMEGAFRPGHFNGVCQIVSKLFEAVKPHRAYFGEKDFQQLAIIREMVRQMQFDLEIVGCPIVREEDGLALSSRNARLSAEERENALKISQTLFKSRTFAATHTVSETLKFVEDAITAVPGLRLEYFEIVDGNTLQKVDNWNQTSYVVGCITVFCGDVRLIDNIKYKES.

30-37 (MGALHAGH) is a binding site for ATP. His37 acts as the Proton donor in catalysis. Residue Gln61 coordinates (R)-pantoate. Gln61 is a binding site for beta-alanine. ATP is bound at residue 147-150 (GEKD). Gln153 provides a ligand contact to (R)-pantoate. ATP is bound by residues Val176 and 184 to 187 (LSSR).

It belongs to the pantothenate synthetase family. Homodimer.

The protein localises to the cytoplasm. The enzyme catalyses (R)-pantoate + beta-alanine + ATP = (R)-pantothenate + AMP + diphosphate + H(+). It functions in the pathway cofactor biosynthesis; (R)-pantothenate biosynthesis; (R)-pantothenate from (R)-pantoate and beta-alanine: step 1/1. In terms of biological role, catalyzes the condensation of pantoate with beta-alanine in an ATP-dependent reaction via a pantoyl-adenylate intermediate. This is Pantothenate synthetase from Bacteroides fragilis (strain YCH46).